We begin with the raw amino-acid sequence, 416 residues long: Counting factor 60 (416 aa).

An N-terminal signal peptide occupies residues 1-22 (MIKKSALITLFLVSLILGVSLS). N-linked (GlcNAc...) asparagine glycosylation is found at N110, N218, N231, N318, and N411.

The protein belongs to the histidine acid phosphatase family. Component of the counting factor (CF) complex, which includes cf60, cf50, cf45-1 and ctnA.

Its subcellular location is the secreted. Its function is as follows. Cell-counting factor that limits the maximum size of the multicellular structure. Does not possess acid phosphatase activity. Cells with decreased levels of this protein form large groups while cells overexpressing this protein form small groups. The chain is Counting factor 60 (cf60) from Dictyostelium discoideum (Social amoeba).